Here is a 63-residue protein sequence, read N- to C-terminus: Large ribosomal subunit protein bL32 (63 aa).

Residues 1 to 20 (MANPKAKMSKSRRDKRRAQF) form a disordered region. Residues 7–18 (KMSKSRRDKRRA) are compositionally biased toward basic residues.

The protein belongs to the bacterial ribosomal protein bL32 family.

The sequence is that of Large ribosomal subunit protein bL32 from Chlorobaculum parvum (strain DSM 263 / NCIMB 8327) (Chlorobium vibrioforme subsp. thiosulfatophilum).